Consider the following 508-residue polypeptide: Maturase K (508 aa).

This sequence belongs to the intron maturase 2 family. MatK subfamily.

The protein resides in the plastid. It localises to the chloroplast. Usually encoded in the trnK tRNA gene intron. Probably assists in splicing its own and other chloroplast group II introns. This Antirrhinum majus (Garden snapdragon) protein is Maturase K.